A 155-amino-acid polypeptide reads, in one-letter code: Ribosomal RNA large subunit methyltransferase H (155 aa).

S-adenosyl-L-methionine contacts are provided by residues L72, G104, and 123-128; that span reads LSRMTF.

It belongs to the RNA methyltransferase RlmH family. In terms of assembly, homodimer.

It localises to the cytoplasm. The catalysed reaction is pseudouridine(1915) in 23S rRNA + S-adenosyl-L-methionine = N(3)-methylpseudouridine(1915) in 23S rRNA + S-adenosyl-L-homocysteine + H(+). Functionally, specifically methylates the pseudouridine at position 1915 (m3Psi1915) in 23S rRNA. The chain is Ribosomal RNA large subunit methyltransferase H from Kosmotoga olearia (strain ATCC BAA-1733 / DSM 21960 / TBF 19.5.1).